Here is a 185-residue protein sequence, read N- to C-terminus: Ribosome-recycling factor (185 aa).

The protein belongs to the RRF family.

Its subcellular location is the cytoplasm. Functionally, responsible for the release of ribosomes from messenger RNA at the termination of protein biosynthesis. May increase the efficiency of translation by recycling ribosomes from one round of translation to another. This chain is Ribosome-recycling factor, found in Shewanella oneidensis (strain ATCC 700550 / JCM 31522 / CIP 106686 / LMG 19005 / NCIMB 14063 / MR-1).